We begin with the raw amino-acid sequence, 523 residues long: WD repeat-containing protein WDS homolog (523 aa).

One can recognise a LisH domain in the interval 16–48 (KKHEFIRILVQCLYSLGFKNSASCLEFESKILY). Residues 49–107 (KTADSEFLEKQVLSGNWDSCVQVLDRIFDNSMDDTRNTALYLVFKQCLLEYLKRGDVSL) enclose the CTLH domain. WD repeat units follow at residues 222 to 261 (AHKN…KVEL), 267 to 306 (SHQN…LRHT), 310 to 353 (NNTG…KAWR), 355 to 394 (TRIP…ERVI), 395 to 434 (SEEQ…KQPL), 438 to 480 (GHRQ…PLEV), and 483 to 523 (GHSM…KPLN).

In terms of assembly, interacts with RANBPM.

The protein localises to the cytoplasm. The chain is WD repeat-containing protein WDS homolog from Arabidopsis thaliana (Mouse-ear cress).